Consider the following 179-residue polypeptide: Large ribosomal subunit protein uL5 (179 aa).

Belongs to the universal ribosomal protein uL5 family. As to quaternary structure, part of the 50S ribosomal subunit; part of the 5S rRNA/L5/L18/L25 subcomplex. Contacts the 5S rRNA and the P site tRNA. Forms a bridge to the 30S subunit in the 70S ribosome.

In terms of biological role, this is one of the proteins that bind and probably mediate the attachment of the 5S RNA into the large ribosomal subunit, where it forms part of the central protuberance. In the 70S ribosome it contacts protein S13 of the 30S subunit (bridge B1b), connecting the 2 subunits; this bridge is implicated in subunit movement. Contacts the P site tRNA; the 5S rRNA and some of its associated proteins might help stabilize positioning of ribosome-bound tRNAs. The polypeptide is Large ribosomal subunit protein uL5 (Desulfosudis oleivorans (strain DSM 6200 / JCM 39069 / Hxd3) (Desulfococcus oleovorans)).